We begin with the raw amino-acid sequence, 170 residues long: Adenine phosphoribosyltransferase (170 aa).

Belongs to the purine/pyrimidine phosphoribosyltransferase family. Homodimer.

It is found in the cytoplasm. The enzyme catalyses AMP + diphosphate = 5-phospho-alpha-D-ribose 1-diphosphate + adenine. It participates in purine metabolism; AMP biosynthesis via salvage pathway; AMP from adenine: step 1/1. Catalyzes a salvage reaction resulting in the formation of AMP, that is energically less costly than de novo synthesis. This is Adenine phosphoribosyltransferase from Geobacillus sp. (strain WCH70).